Here is a 295-residue protein sequence, read N- to C-terminus: Aspartate carbamoyltransferase catalytic subunit (295 aa).

2 residues coordinate carbamoyl phosphate: Arg54 and Thr55. An L-aspartate-binding site is contributed by Lys82. Carbamoyl phosphate-binding residues include Arg104, His132, and Gln135. Residues Arg165 and Arg218 each coordinate L-aspartate. Carbamoyl phosphate-binding residues include Gly257 and Pro258.

The protein belongs to the aspartate/ornithine carbamoyltransferase superfamily. ATCase family. As to quaternary structure, heterododecamer (2C3:3R2) of six catalytic PyrB chains organized as two trimers (C3), and six regulatory PyrI chains organized as three dimers (R2).

The catalysed reaction is carbamoyl phosphate + L-aspartate = N-carbamoyl-L-aspartate + phosphate + H(+). It participates in pyrimidine metabolism; UMP biosynthesis via de novo pathway; (S)-dihydroorotate from bicarbonate: step 2/3. In terms of biological role, catalyzes the condensation of carbamoyl phosphate and aspartate to form carbamoyl aspartate and inorganic phosphate, the committed step in the de novo pyrimidine nucleotide biosynthesis pathway. This is Aspartate carbamoyltransferase catalytic subunit from Wolbachia pipientis wMel.